We begin with the raw amino-acid sequence, 238 residues long: Probable transcriptional regulatory protein SSU98_0387 (238 aa).

The protein belongs to the TACO1 family. YeeN subfamily.

It is found in the cytoplasm. This Streptococcus suis (strain 98HAH33) protein is Probable transcriptional regulatory protein SSU98_0387.